The chain runs to 1678 residues: Serine/threonine-protein kinase pakD (1678 aa).

Low complexity predominate over residues Met1–Ser15. Disordered regions lie at residues Met1–Phe73, Asn180–Asn224, Gln262–Asn428, and Lys442–Ser489. Over residues Phe17 to Glu34 the composition is skewed to polar residues. Composition is skewed to low complexity over residues Gln35–Phe73 and Asn180–Asn214. One can recognise a Calponin-homology (CH) domain in the interval Lys82–Asn189. Residues Arg215–Asn224 show a composition bias toward polar residues. 2 stretches are compositionally biased toward low complexity: residues Asn276–Asn359 and Asn399–Asn428. The span at Asp460 to Ser472 shows a compositional bias: acidic residues. Coiled-coil stretches lie at residues Lys512–Leu542 and Thr570–Thr628. Low complexity-rich tracts occupy residues Ser631–Ser654, Asn662–Ser671, and Asn695–Ser713. 2 disordered regions span residues Ser631–Arg672 and Pro693–Asn722. Residues Val752–Asp862 are a coiled coil. The Phorbol-ester/DAG-type zinc-finger motif lies at Pro1141–Cys1197. Residues Val1202–Gly1215 form the CRIB domain. Disordered regions lie at residues Leu1267–Gln1292 and Asn1323–Asn1346. Positions Asn1269–Ile1309 form a coiled coil. A Protein kinase domain is found at Tyr1376–Leu1647. ATP is bound by residues Val1382 to Val1390 and Lys1405. Residue Asp1515 is the Proton acceptor of the active site.

It belongs to the protein kinase superfamily. STE Ser/Thr protein kinase family. STE20 subfamily. The cofactor is Mg(2+).

The enzyme catalyses L-seryl-[protein] + ATP = O-phospho-L-seryl-[protein] + ADP + H(+). It catalyses the reaction L-threonyl-[protein] + ATP = O-phospho-L-threonyl-[protein] + ADP + H(+). The protein is Serine/threonine-protein kinase pakD of Dictyostelium discoideum (Social amoeba).